A 224-amino-acid polypeptide reads, in one-letter code: dTTP/UTP pyrophosphatase (224 aa).

Aspartate 77 serves as the catalytic Proton acceptor.

Belongs to the Maf family. YhdE subfamily. The cofactor is a divalent metal cation.

The protein resides in the cytoplasm. It carries out the reaction dTTP + H2O = dTMP + diphosphate + H(+). It catalyses the reaction UTP + H2O = UMP + diphosphate + H(+). Nucleoside triphosphate pyrophosphatase that hydrolyzes dTTP and UTP. May have a dual role in cell division arrest and in preventing the incorporation of modified nucleotides into cellular nucleic acids. This Dehalococcoides mccartyi (strain CBDB1) protein is dTTP/UTP pyrophosphatase.